The primary structure comprises 700 residues: UvrABC system protein C (700 aa).

The GIY-YIG domain maps to 11–90 (TTPGVYLYKD…IKKHRPRYNI (80 aa)). The UVR domain occupies 200–235 (TELIDMLRADMQAASDALEFEEAALLRDQLQAVERT).

This sequence belongs to the UvrC family. In terms of assembly, interacts with UvrB in an incision complex.

It localises to the cytoplasm. Its function is as follows. The UvrABC repair system catalyzes the recognition and processing of DNA lesions. UvrC both incises the 5' and 3' sides of the lesion. The N-terminal half is responsible for the 3' incision and the C-terminal half is responsible for the 5' incision. The chain is UvrABC system protein C from Oleidesulfovibrio alaskensis (strain ATCC BAA-1058 / DSM 17464 / G20) (Desulfovibrio alaskensis).